Here is a 98-residue protein sequence, read N- to C-terminus: Large ribosomal subunit protein bL25 (98 aa).

Belongs to the bacterial ribosomal protein bL25 family. As to quaternary structure, part of the 50S ribosomal subunit; part of the 5S rRNA/L5/L18/L25 subcomplex. Contacts the 5S rRNA. Binds to the 5S rRNA independently of L5 and L18.

Its function is as follows. This is one of the proteins that binds to the 5S RNA in the ribosome where it forms part of the central protuberance. The polypeptide is Large ribosomal subunit protein bL25 (Synechocystis sp. (strain ATCC 27184 / PCC 6803 / Kazusa)).